Reading from the N-terminus, the 298-residue chain is Proline-rich protein 32 (298 aa).

A disordered region spans residues 36–56 (CLSSKPEDDAEPWGQPQVPLR).

The sequence is that of Proline-rich protein 32 (PRR32) from Homo sapiens (Human).